The sequence spans 946 residues: Glycine dehydrogenase (decarboxylating) (946 aa).

Lys700 is modified (N6-(pyridoxal phosphate)lysine).

This sequence belongs to the GcvP family. As to quaternary structure, the glycine cleavage system is composed of four proteins: P, T, L and H. The cofactor is pyridoxal 5'-phosphate.

The enzyme catalyses N(6)-[(R)-lipoyl]-L-lysyl-[glycine-cleavage complex H protein] + glycine + H(+) = N(6)-[(R)-S(8)-aminomethyldihydrolipoyl]-L-lysyl-[glycine-cleavage complex H protein] + CO2. The glycine cleavage system catalyzes the degradation of glycine. The P protein binds the alpha-amino group of glycine through its pyridoxal phosphate cofactor; CO(2) is released and the remaining methylamine moiety is then transferred to the lipoamide cofactor of the H protein. In Pseudomonas fluorescens (strain SBW25), this protein is Glycine dehydrogenase (decarboxylating).